The following is a 534-amino-acid chain: Blue-light-activated protein (534 aa).

The PAS domain maps to 20-93 (GKDIFFAAVE…QSIRDAIAQR (74 aa)). An S-4a-FMN cysteine modification is found at Cys70. The region spanning 94–148 (NDISAEIINYRKDGSSFWNALFISPVYNDAGDLIYFFASQLDISRRKDAEEALRQ) is the PAC domain. Residues 161-390 (GIAHDFNNLL…TLRLYFPVDE (230 aa)) form the Histidine kinase domain. His164 carries the post-translational modification Phosphohistidine; by autocatalysis. Positions 411–527 (RILIVEDRPD…DLARKVRQVL (117 aa)) constitute a Response regulatory domain. Asp461 is subject to 4-aspartylphosphate.

Post-translationally, FMN binds covalently to cysteine after exposure to blue light and this bond is spontaneously broken in the dark.

It carries out the reaction ATP + protein L-histidine = ADP + protein N-phospho-L-histidine.. In terms of biological role, photosensitive kinase and response regulator that is involved in increased bacterial virulence upon exposure to light. The chain is Blue-light-activated protein from Pseudomonas syringae pv. tomato (strain ATCC BAA-871 / DC3000).